Reading from the N-terminus, the 338-residue chain is Aspartate carbamoyltransferase catalytic subunit (338 aa).

Positions 59 and 60 each coordinate carbamoyl phosphate. Residue Lys-87 coordinates L-aspartate. Arg-109, His-142, and Gln-145 together coordinate carbamoyl phosphate. Residues Arg-182 and Arg-248 each contribute to the L-aspartate site. Carbamoyl phosphate is bound by residues Gly-289 and Pro-290.

The protein belongs to the aspartate/ornithine carbamoyltransferase superfamily. ATCase family. As to quaternary structure, heterododecamer (2C3:3R2) of six catalytic PyrB chains organized as two trimers (C3), and six regulatory PyrI chains organized as three dimers (R2).

The enzyme catalyses carbamoyl phosphate + L-aspartate = N-carbamoyl-L-aspartate + phosphate + H(+). It functions in the pathway pyrimidine metabolism; UMP biosynthesis via de novo pathway; (S)-dihydroorotate from bicarbonate: step 2/3. Catalyzes the condensation of carbamoyl phosphate and aspartate to form carbamoyl aspartate and inorganic phosphate, the committed step in the de novo pyrimidine nucleotide biosynthesis pathway. The polypeptide is Aspartate carbamoyltransferase catalytic subunit (Synechococcus elongatus (strain ATCC 33912 / PCC 7942 / FACHB-805) (Anacystis nidulans R2)).